A 176-amino-acid polypeptide reads, in one-letter code: dCTP deaminase (176 aa).

DCTP-binding positions include 99 to 104 (RSTLAR) and aspartate 115. The active-site Proton donor/acceptor is the glutamate 125. Position 163 (glutamine 163) interacts with dCTP.

It belongs to the dCTP deaminase family. In terms of assembly, homotrimer.

It catalyses the reaction dCTP + H2O + H(+) = dUTP + NH4(+). It functions in the pathway pyrimidine metabolism; dUMP biosynthesis; dUMP from dCTP (dUTP route): step 1/2. Functionally, catalyzes the deamination of dCTP to dUTP. The chain is dCTP deaminase from Pyrobaculum calidifontis (strain DSM 21063 / JCM 11548 / VA1).